Consider the following 217-residue polypeptide: Thiopurine S-methyltransferase (217 aa).

4 residues coordinate S-adenosyl-L-methionine: Trp10, Leu45, Glu66, and Arg127.

Belongs to the class I-like SAM-binding methyltransferase superfamily. TPMT family.

Its subcellular location is the cytoplasm. The enzyme catalyses S-adenosyl-L-methionine + a thiopurine = S-adenosyl-L-homocysteine + a thiopurine S-methylether.. The sequence is that of Thiopurine S-methyltransferase from Acinetobacter baylyi (strain ATCC 33305 / BD413 / ADP1).